The chain runs to 173 residues: MTLLFPLIASEGGFGINLNLFETNLINLVIVIGVLYWFLKGFLGGMLERRRETILKDLQDAEKRLKTATIELSKAQEELSAAQQKAEKIRLDGQARAEAIRADGEKRTIQAMAALKQDALADLTAEGARLTEQLRREAALSAIDKALAELPNRLDSKAQAKLIDSSISNLEDV.

Residues 25–45 form a helical membrane-spanning segment; that stretch reads LINLVIVIGVLYWFLKGFLGG.

The protein belongs to the ATPase B chain family. F-type ATPases have 2 components, F(1) - the catalytic core - and F(0) - the membrane proton channel. F(1) has five subunits: alpha(3), beta(3), gamma(1), delta(1), epsilon(1). F(0) has four main subunits: a(1), b(1), b'(1) and c(10-14). The alpha and beta chains form an alternating ring which encloses part of the gamma chain. F(1) is attached to F(0) by a central stalk formed by the gamma and epsilon chains, while a peripheral stalk is formed by the delta, b and b' chains.

The protein localises to the cellular thylakoid membrane. Functionally, f(1)F(0) ATP synthase produces ATP from ADP in the presence of a proton or sodium gradient. F-type ATPases consist of two structural domains, F(1) containing the extramembraneous catalytic core and F(0) containing the membrane proton channel, linked together by a central stalk and a peripheral stalk. During catalysis, ATP synthesis in the catalytic domain of F(1) is coupled via a rotary mechanism of the central stalk subunits to proton translocation. Its function is as follows. Component of the F(0) channel, it forms part of the peripheral stalk, linking F(1) to F(0). The protein is ATP synthase subunit b of Synechococcus sp. (strain CC9311).